Here is an 892-residue protein sequence, read N- to C-terminus: MTDVTLKALAAERQVSVDRLVQQFADAGIRKSADDSVSAQEKQTLLAHLNREAVSGPDKLTLQRKTRSTLNIPGTGGKSKSVQIEVRKKRTFVKRDPQEAERLAAEEQAQREAEEQARREAEEQAKREAQQKAEREAAEQAKREAAEKAKREAAEKDKVSNQQTDDMIKTAQAEKARRENEAAELKRKAEEEARRKLEEEARRVAEEARRMAEENKWTATPEPVEDTSDYHVTTSQHARQAEDENDREVEGGRGRGRNAKAARPAKKGKHAESKADREEARAAVRGGKGGKRKGSSLQQGFQKPAQAVNRDVVIGETITVGELANKMAVKGSQVIKAMMKLGAMATINQVIDQETAQLVAEEMGHKVILRRENELEEAVMSDRDTGAAAEPRAPVVTIMGHVDHGKTSLLDYIRSTKVASGEAGGITQHIGAYHVETDNGMITFLDTPGHAAFTSMRARGAQATDIVVLVVAADDGVMPQTIEAIQHAKAAGVPVVVAVNKIDKPEADPDRVKNELSQYGILPEEWGGESQFVHVSAKAGTGIDELLDAILLQAEVLELKAVRKGMASGAVIESFLDKGRGPVATVLVREGTLHKGDIVLCGFEYGRVRAMRNELGQEVLEAGPSIPVEILGLSGVPAAGDEVTVVRDEKKAREVALYRQGKFREVKLARQQKSKLENMFANMTEGEVHEVNIVLKADVQGSVEAISDSLLKLSTDEVKVKIIGSGVGGITETDATLAAASNAILVGFNVRADASARKVIESESLDLRYYSVIYNLIDEVKAAMSGMLSPELKQQIIGLAEVRDVFKSPKFGAIAGCMVTEGTIKRHNPIRVLRDNVVIYEGELESLRRFKDDVNEVRNGMECGIGVKNYNDVRVGDMIEVFEIIEIQRTIA.

The segment at 88–306 (KKRTFVKRDP…LQQGFQKPAQ (219 aa)) is disordered. Basic and acidic residues-rich tracts occupy residues 93–159 (VKRD…KDKV) and 166–216 (DMIK…EENK). A compositionally biased stretch (basic residues) spans 254-269 (GRGRNAKAARPAKKGK). Basic and acidic residues predominate over residues 270-282 (HAESKADREEARA). The tr-type G domain maps to 391–560 (PRAPVVTIMG…LLQAEVLELK (170 aa)). The segment at 400-407 (GHVDHGKT) is G1. Residue 400–407 (GHVDHGKT) coordinates GTP. Positions 425–429 (GITQH) are G2. The G3 stretch occupies residues 446-449 (DTPG). GTP-binding positions include 446-450 (DTPGH) and 500-503 (NKID). Residues 500–503 (NKID) are G4. A G5 region spans residues 536 to 538 (SAK).

It belongs to the TRAFAC class translation factor GTPase superfamily. Classic translation factor GTPase family. IF-2 subfamily.

It localises to the cytoplasm. One of the essential components for the initiation of protein synthesis. Protects formylmethionyl-tRNA from spontaneous hydrolysis and promotes its binding to the 30S ribosomal subunits. Also involved in the hydrolysis of GTP during the formation of the 70S ribosomal complex. The polypeptide is Translation initiation factor IF-2 (Salmonella schwarzengrund (strain CVM19633)).